We begin with the raw amino-acid sequence, 182 residues long: Dirigent protein 5 (182 aa).

Residues 1 to 23 (MVGQMKSFLFLFVFLVLTKTVIS) form the signal peptide. A disulfide bridge links Cys35 with Cys181. Asn54 and Asn118 each carry an N-linked (GlcNAc...) asparagine glycan.

Belongs to the plant dirigent protein family. Homodimer. In terms of tissue distribution, confined to shoot meristem, vascular region of cotyledons and siliques abscission zone.

The protein resides in the secreted. The protein localises to the extracellular space. It is found in the apoplast. Functionally, dirigent proteins impart stereoselectivity on the phenoxy radical-coupling reaction, yielding optically active lignans from two molecules of coniferyl alcohol in the biosynthesis of lignans, flavonolignans, and alkaloids and thus plays a central role in plant secondary metabolism. Enantiocomplementary dirigent protein that mediates the laccase-catalyzed enantioselective oxidative phenol coupling of (E)-coniferyl alcohol to (-)-pinoresinol. This Arabidopsis thaliana (Mouse-ear cress) protein is Dirigent protein 5 (DIR5).